The sequence spans 321 residues: Cytochrome f (321 aa).

The signal sequence occupies residues 1–35; the sequence is MQNRNKNNWMKKWVIRSISILIILNIIAWPSISYA. The heme site is built by Tyr-36, Cys-56, Cys-59, and His-60. The helical transmembrane segment at 287–306 threads the bilayer; that stretch reads IQGLLLFFVSVIMAQILLVL.

This sequence belongs to the cytochrome f family. As to quaternary structure, the 4 large subunits of the cytochrome b6-f complex are cytochrome b6, subunit IV (17 kDa polypeptide, petD), cytochrome f and the Rieske protein, while the 4 small subunits are PetG, PetL, PetM and PetN. The complex functions as a dimer. It depends on heme as a cofactor.

It is found in the plastid. It localises to the chloroplast thylakoid membrane. In terms of biological role, component of the cytochrome b6-f complex, which mediates electron transfer between photosystem II (PSII) and photosystem I (PSI), cyclic electron flow around PSI, and state transitions. This Psilotum nudum (Whisk fern) protein is Cytochrome f.